A 334-amino-acid polypeptide reads, in one-letter code: Methionyl-tRNA formyltransferase (334 aa).

111–114 (SILP) lines the (6S)-5,6,7,8-tetrahydrofolate pocket.

It belongs to the Fmt family.

The enzyme catalyses L-methionyl-tRNA(fMet) + (6R)-10-formyltetrahydrofolate = N-formyl-L-methionyl-tRNA(fMet) + (6S)-5,6,7,8-tetrahydrofolate + H(+). Attaches a formyl group to the free amino group of methionyl-tRNA(fMet). The formyl group appears to play a dual role in the initiator identity of N-formylmethionyl-tRNA by promoting its recognition by IF2 and preventing the misappropriation of this tRNA by the elongation apparatus. The chain is Methionyl-tRNA formyltransferase from Gloeothece citriformis (strain PCC 7424) (Cyanothece sp. (strain PCC 7424)).